The following is a 606-amino-acid chain: Granule-bound starch synthase 1, chloroplastic/amyloplastic (606 aa).

Residues 1–76 (MSALTTSQLA…GSRRFPSVVV (76 aa)) constitute a chloroplast transit peptide. Positions 29 to 67 (RHGFQGLKPRSPAGGDASSLSVTTSARATPKQQRSVQRG) are disordered. Residues 46-66 (SSLSVTTSARATPKQQRSVQR) show a composition bias toward polar residues. Lys-97 serves as a coordination point for ADP-alpha-D-glucose.

It belongs to the glycosyltransferase 1 family. Bacterial/plant glycogen synthase subfamily.

It localises to the plastid. Its subcellular location is the chloroplast. The protein localises to the amyloplast. It catalyses the reaction an NDP-alpha-D-glucose + [(1-&gt;4)-alpha-D-glucosyl](n) = [(1-&gt;4)-alpha-D-glucosyl](n+1) + a ribonucleoside 5'-diphosphate + H(+). The protein operates within glycan biosynthesis; starch biosynthesis. Required for the synthesis of amylose in endosperm. This is Granule-bound starch synthase 1, chloroplastic/amyloplastic (WAXY) from Oryza sativa (Rice).